The chain runs to 493 residues: Probable cytosol aminopeptidase (493 aa).

The Mn(2+) site is built by lysine 260 and aspartate 265. Lysine 272 is a catalytic residue. Aspartate 283, aspartate 342, and glutamate 344 together coordinate Mn(2+). Arginine 346 is a catalytic residue.

It belongs to the peptidase M17 family. It depends on Mn(2+) as a cofactor.

Its subcellular location is the cytoplasm. It carries out the reaction Release of an N-terminal amino acid, Xaa-|-Yaa-, in which Xaa is preferably Leu, but may be other amino acids including Pro although not Arg or Lys, and Yaa may be Pro. Amino acid amides and methyl esters are also readily hydrolyzed, but rates on arylamides are exceedingly low.. It catalyses the reaction Release of an N-terminal amino acid, preferentially leucine, but not glutamic or aspartic acids.. In terms of biological role, presumably involved in the processing and regular turnover of intracellular proteins. Catalyzes the removal of unsubstituted N-terminal amino acids from various peptides. In Clostridium perfringens (strain 13 / Type A), this protein is Probable cytosol aminopeptidase.